A 299-amino-acid polypeptide reads, in one-letter code: Fibrinogen silencer-binding protein (299 aa).

Lys94 is covalently cross-linked (Glycyl lysine isopeptide (Lys-Gly) (interchain with G-Cter in SUMO2)).

Interacts with APBA1 (via PDZ 1 and 2 domains). Expressed in multiple tissues including brain.

The protein resides in the nucleus. Its function is as follows. Transcriptional repressor that down-regulates the expression of the fibrinogen gamma chain. Represses transcription of GSK3B gene promoter via its interaction with APBA1. The polypeptide is Fibrinogen silencer-binding protein (FSBP) (Homo sapiens (Human)).